A 201-amino-acid polypeptide reads, in one-letter code: MKLPKGVKNPVFYGQQPEKKVPMSSGHEIKQTPVVLAMLKGPGPAKYLRPSCTGYIDHDVSMFQEPAYTLHAWHPEKRIMDIRSPGPCYFLDPKITRFGMASCPQVPMAEHISNLPWPPWTRTGSTRICQEAPDRPHTPGQSRPSIRTAALSIAWPNALATRWTTHLGLAPAPTMSSRSGHTSPARLLSPWASSTRPTYAR.

The STPGR repeat unit spans residues 171-186 (PAPTMSSRSGHTSPAR). Residues 172–201 (APTMSSRSGHTSPARLLSPWASSTRPTYAR) are disordered. The segment covering 191–201 (WASSTRPTYAR) has biased composition (polar residues).

Belongs to the CIMAP family.

This chain is Protein CIMAP1C (CIMAP1C), found in Bos taurus (Bovine).